A 240-amino-acid chain; its full sequence is MATLFIADLHLQTEEPAIVAGFLRFLAVEARQADALYILGDLFEAWIGDDDPNPLHREMAVAIKSLVDSGVPCFFIHGNRDFLIGKRFARESGMILLPQEKVLDLYGRNVLIMHGDTLCTDDAGYQAFRAKVHNPWVQRLFLTLPLFIRRRIAARMRAGSKAANSSKSLDIMDVNAQTVVAEMEKHRVQWLIHGHTHRPAVHELSANDQPAFRVVLGAWHHEGSMVKVTPDNVELIAFPL.

Positions 8, 10, 41, 79, and 114 each coordinate Mn(2+). A substrate-binding site is contributed by asparagine 79 to arginine 80. The substrate site is built by aspartate 122, serine 160, asparagine 164, lysine 167, and histidine 195. Mn(2+) contacts are provided by histidine 195 and histidine 197.

This sequence belongs to the LpxH family. It depends on Mn(2+) as a cofactor.

It is found in the cell inner membrane. The enzyme catalyses UDP-2-N,3-O-bis[(3R)-3-hydroxytetradecanoyl]-alpha-D-glucosamine + H2O = 2-N,3-O-bis[(3R)-3-hydroxytetradecanoyl]-alpha-D-glucosaminyl 1-phosphate + UMP + 2 H(+). The protein operates within glycolipid biosynthesis; lipid IV(A) biosynthesis; lipid IV(A) from (3R)-3-hydroxytetradecanoyl-[acyl-carrier-protein] and UDP-N-acetyl-alpha-D-glucosamine: step 4/6. Functionally, hydrolyzes the pyrophosphate bond of UDP-2,3-diacylglucosamine to yield 2,3-diacylglucosamine 1-phosphate (lipid X) and UMP by catalyzing the attack of water at the alpha-P atom. Involved in the biosynthesis of lipid A, a phosphorylated glycolipid that anchors the lipopolysaccharide to the outer membrane of the cell. This Salmonella newport (strain SL254) protein is UDP-2,3-diacylglucosamine hydrolase.